The chain runs to 1116 residues: MAP kinase kinase kinase mkh1 (1116 aa).

Disordered regions lie at residues 510 to 601 (LKMP…SNSL) and 618 to 647 (ALDESDLSGDPFWAIQPKQSSSQVPKENHH). A compositionally biased stretch (low complexity) spans 515–531 (NSGSSAPQSPSSNTSAS). Positions 553 to 569 (LRRKNTLTRRPSIRHAR) are enriched in basic residues. Residues 588–601 (SFDPKASSKSSNSL) are compositionally biased toward low complexity. Polar residues predominate over residues 634-647 (PKQSSSQVPKENHH). In terms of domain architecture, Protein kinase spans 825–1094 (WMKGELIGNG…AEELLNHPFM (270 aa)). Residues 831–839 (IGNGTYGKV) and lysine 854 each bind ATP. Aspartate 955 acts as the Proton acceptor in catalysis.

It belongs to the protein kinase superfamily. STE Ser/Thr protein kinase family. MAP kinase kinase kinase subfamily.

The enzyme catalyses L-seryl-[protein] + ATP = O-phospho-L-seryl-[protein] + ADP + H(+). It catalyses the reaction L-threonyl-[protein] + ATP = O-phospho-L-threonyl-[protein] + ADP + H(+). Its function is as follows. May regulate cell morphology, cell wall integrity, salt resistance, cell cycle reentry from stationary-phase arrest, and filamentous growth in response to stress. Activates the MAP kinase kinase skh1/pek1 by phosphorylation. This Schizosaccharomyces pombe (strain 972 / ATCC 24843) (Fission yeast) protein is MAP kinase kinase kinase mkh1 (mkh1).